A 337-amino-acid polypeptide reads, in one-letter code: HTH-type transcriptional repressor PurR (337 aa).

The HTH lacI-type domain maps to 2–56 (ATIKDVAKLAAVSTTTVSHVINKTRFVAEATQKRVWEAVEELNYAPSAVARSLKC). The segment at residues 4–23 (IKDVAKLAAVSTTTVSHVIN) is a DNA-binding region (H-T-H motif). A DNA-binding region spans residues 48 to 56 (SAVARSLKC). Phe-73, Lys-189, Thr-191, Phe-220, and Asp-276 together coordinate hypoxanthine.

As to quaternary structure, homodimer.

It participates in purine metabolism; purine nucleotide biosynthesis [regulation]. In terms of biological role, is the main repressor of the genes involved in the de novo synthesis of purine nucleotides, regulating purB, purC, purEK, purF, purHD, purL, purMN and guaBA expression. PurR is allosterically activated to bind its cognate DNA by binding the purine corepressors, hypoxanthine or guanine, thereby effecting transcription repression. This is HTH-type transcriptional repressor PurR from Aliivibrio fischeri (strain MJ11) (Vibrio fischeri).